Here is a 448-residue protein sequence, read N- to C-terminus: uncharacterized protein (448 aa).

An ATP-binding site is contributed by 257–264 (GRNAQGKT).

This is an uncharacterized protein from Methanocaldococcus jannaschii (strain ATCC 43067 / DSM 2661 / JAL-1 / JCM 10045 / NBRC 100440) (Methanococcus jannaschii).